The chain runs to 195 residues: Cysteine/O-acetylserine efflux protein (195 aa).

Residues M1–S7 lie on the Periplasmic side of the membrane. A helical transmembrane segment spans residues A8–L28. At S29–M46 the chain is on the cytoplasmic side. The helical transmembrane segment at S47–I67 threads the bilayer. Residues D68–P69 are Periplasmic-facing. A helical transmembrane segment spans residues A70–I90. Residues A91 to P104 lie on the Cytoplasmic side of the membrane. The chain crosses the membrane as a helical span at residues I105–V125. The Periplasmic segment spans residues T126–W141. Residues I142–L162 traverse the membrane as a helical segment. The Cytoplasmic segment spans residues A163 to R176. Residues Q177–F194 traverse the membrane as a helical segment. Y195 is a topological domain (periplasmic).

It belongs to the Rht family.

It localises to the cell inner membrane. The catalysed reaction is O-acetyl-L-serine(in) = O-acetyl-L-serine(out). It carries out the reaction L-cysteine(in) = L-cysteine(out). Functionally, exporter of O-acetylserine (OAS) and cysteine. In Escherichia coli O157:H7, this protein is Cysteine/O-acetylserine efflux protein (eamB).